Reading from the N-terminus, the 261-residue chain is Cobalt transport protein CbiM (261 aa).

A signal peptide spans 1–33 (MLRRVLASKRASLILMGMLSFYIIVSASAPAYA). The next 7 helical transmembrane spans lie at 41 to 61 (LPAG…LLGV), 76 to 96 (LLLA…LPSV), 108 to 128 (LGSV…VLLF), 140 to 160 (TLGA…YWIY), 172 to 192 (IAIF…TSVQ), 197 to 217 (FPAP…IFAI), and 220 to 240 (IPLA…LQSY).

This sequence belongs to the CbiM family. As to quaternary structure, forms an energy-coupling factor (ECF) transporter complex composed of an ATP-binding protein (A component, CbiO), a transmembrane protein (T component, CbiQ) and 2 possible substrate-capture proteins (S components, CbiM and CbiN) of unknown stoichimetry.

Its subcellular location is the cell inner membrane. It functions in the pathway cofactor biosynthesis; adenosylcobalamin biosynthesis. Its function is as follows. Part of the energy-coupling factor (ECF) transporter complex CbiMNOQ involved in cobalt import. This is Cobalt transport protein CbiM from Nostoc sp. (strain PCC 7120 / SAG 25.82 / UTEX 2576).